The sequence spans 219 residues: Large ribosomal subunit protein uL3 (219 aa).

2 disordered regions span residues 62–81 (DSRSSKYANKPAEGHAKKAG) and 136–156 (QARGPMSHGSHFHRAPGSVGM).

This sequence belongs to the universal ribosomal protein uL3 family. In terms of assembly, part of the 50S ribosomal subunit. Forms a cluster with proteins L14 and L19.

One of the primary rRNA binding proteins, it binds directly near the 3'-end of the 23S rRNA, where it nucleates assembly of the 50S subunit. This Staphylococcus saprophyticus subsp. saprophyticus (strain ATCC 15305 / DSM 20229 / NCIMB 8711 / NCTC 7292 / S-41) protein is Large ribosomal subunit protein uL3.